The following is a 173-amino-acid chain: uncharacterized protein (173 aa).

The first 20 residues, 1-20 (MWYKVLGIVSLCSVYVSTQG), serve as a signal peptide directing secretion. The N-linked (GlcNAc...) asparagine glycan is linked to N53.

In terms of tissue distribution, component of the acid-insoluble organic matrix of calcified shell layers (at protein level).

It localises to the secreted. This is an uncharacterized protein from Haliotis asinina (Donkey's ear abalone).